Here is a 99-residue protein sequence, read N- to C-terminus: Protein Tat (99 aa).

The tract at residues 1–24 (MDPVDPKLEPWNHPGSQPQTACNN) is interaction with human CREBBP. Residues 1 to 48 (MDPVDPKLEPWNHPGSQPQTACNNCYCKKCCYHCQMCFLKKGLGISYG) are transactivation. Positions 22, 25, and 27 each coordinate Zn(2+). A cysteine-rich region spans residues 22–37 (CNNCYCKKCCYHCQMC). An N6-acetyllysine; by host PCAF modification is found at Lys-28. Zn(2+)-binding residues include Cys-30, His-33, Cys-34, and Cys-37. Residues 38-48 (FLKKGLGISYG) are core. Residues 48–58 (GRKKRSQRHRT) are compositionally biased toward basic residues. The interval 48–99 (GRKKRSQRHRTPASLQDHQNSISKQPLSRTHGDPTGPKEQKKEVASKTETDP) is disordered. Residues 49-57 (RKKRSQRHR) carry the Nuclear localization signal, RNA-binding (TAR), and protein transduction motif. The interaction with the host capping enzyme RNGTT stretch occupies residues 49-86 (RKKRSQRHRTPASLQDHQNSISKQPLSRTHGDPTGPKE). Residues Lys-50 and Lys-51 each carry the N6-acetyllysine; by host EP300 and GCN5L2 modification. Asymmetric dimethylarginine; by host PRMT6 is present on Arg-52. A compositionally biased stretch (polar residues) spans 60–75 (ASLQDHQNSISKQPLS). Residue Lys-71 forms a Glycyl lysine isopeptide (Lys-Gly) (interchain with G-Cter in ubiquitin) linkage. Residues 77–99 (THGDPTGPKEQKKEVASKTETDP) show a composition bias toward basic and acidic residues.

It belongs to the lentiviruses Tat family. As to quaternary structure, interacts with host CCNT1. Associates with the P-TEFb complex composed at least of Tat, P-TEFb (CDK9 and CCNT1), TAR RNA, RNA Pol II. Recruits the HATs CREBBP, TAF1/TFIID, EP300, PCAF and GCN5L2. Interacts with host KAT5/Tip60; this interaction targets the latter to degradation. Interacts with the host deacetylase SIRT1. Interacts with host capping enzyme RNGTT; this interaction stimulates RNGTT. Binds to host KDR, and to the host integrins ITGAV/ITGB3 and ITGA5/ITGB1. Interacts with host KPNB1/importin beta-1 without previous binding to KPNA1/importin alpha-1. Interacts with EIF2AK2. Interacts with host nucleosome assembly protein NAP1L1; this interaction may be required for the transport of Tat within the nucleus, since the two proteins interact at the nuclear rim. Interacts with host C1QBP/SF2P32; this interaction involves lysine-acetylated Tat. Interacts with the host chemokine receptors CCR2, CCR3 and CXCR4. Interacts with host DPP4/CD26; this interaction may trigger an anti-proliferative effect. Interacts with host LDLR. Interacts with the host extracellular matrix metalloproteinase MMP1. Interacts with host PRMT6; this interaction mediates Tat's methylation. Interacts with, and is ubiquitinated by MDM2/Hdm2. Interacts with host PSMC3 and HTATIP2. Interacts with STAB1; this interaction may overcome SATB1-mediated repression of IL2 and IL2RA (interleukin) in T cells by binding to the same domain than HDAC1. Interacts (when acetylated) with human CDK13, thereby increasing HIV-1 mRNA splicing and promoting the production of the doubly spliced HIV-1 protein Nef. Interacts with host TBP; this interaction modulates the activity of transcriptional pre-initiation complex. Interacts with host RELA. Interacts with host PLSCR1; this interaction negatively regulates Tat transactivation activity by altering its subcellular distribution. Asymmetrical arginine methylation by host PRMT6 seems to diminish the transactivation capacity of Tat and affects the interaction with host CCNT1. In terms of processing, acetylation by EP300, CREBBP, GCN5L2/GCN5 and PCAF regulates the transactivation activity of Tat. EP300-mediated acetylation of Lys-50 promotes dissociation of Tat from the TAR RNA through the competitive binding to PCAF's bromodomain. In addition, the non-acetylated Tat's N-terminus can also interact with PCAF. PCAF-mediated acetylation of Lys-28 enhances Tat's binding to CCNT1. Lys-50 is deacetylated by SIRT1. Post-translationally, polyubiquitination by host MDM2 does not target Tat to degradation, but activates its transactivation function and fosters interaction with CCNT1 and TAR RNA. Phosphorylated by EIF2AK2 on serine and threonine residues adjacent to the basic region important for TAR RNA binding and function. Phosphorylation of Tat by EIF2AK2 is dependent on the prior activation of EIF2AK2 by dsRNA.

The protein localises to the host nucleus. It is found in the host nucleolus. It localises to the host cytoplasm. The protein resides in the secreted. Its function is as follows. Transcriptional activator that increases RNA Pol II processivity, thereby increasing the level of full-length viral transcripts. Recognizes a hairpin structure at the 5'-LTR of the nascent viral mRNAs referred to as the transactivation responsive RNA element (TAR) and recruits the cyclin T1-CDK9 complex (P-TEFb complex) that will in turn hyperphosphorylate the RNA polymerase II to allow efficient elongation. The CDK9 component of P-TEFb and other Tat-activated kinases hyperphosphorylate the C-terminus of RNA Pol II that becomes stabilized and much more processive. Other factors such as HTATSF1/Tat-SF1, SUPT5H/SPT5, and HTATIP2 are also important for Tat's function. Besides its effect on RNA Pol II processivity, Tat induces chromatin remodeling of proviral genes by recruiting the histone acetyltransferases (HATs) CREBBP, EP300 and PCAF to the chromatin. This also contributes to the increase in proviral transcription rate, especially when the provirus integrates in transcriptionally silent region of the host genome. To ensure maximal activation of the LTR, Tat mediates nuclear translocation of NF-kappa-B by interacting with host RELA. Through its interaction with host TBP, Tat may also modulate transcription initiation. Tat can reactivate a latently infected cell by penetrating in it and transactivating its LTR promoter. In the cytoplasm, Tat is thought to act as a translational activator of HIV-1 mRNAs. Functionally, extracellular circulating Tat can be endocytosed by surrounding uninfected cells via the binding to several surface receptors such as CD26, CXCR4, heparan sulfate proteoglycans (HSPG) or LDLR. Neurons are rarely infected, but they internalize Tat via their LDLR. Through its interaction with nuclear HATs, Tat is potentially able to control the acetylation-dependent cellular gene expression. Modulates the expression of many cellular genes involved in cell survival, proliferation or in coding for cytokines or cytokine receptors. Tat plays a role in T-cell and neurons apoptosis. Tat induced neurotoxicity and apoptosis probably contribute to neuroAIDS. Circulating Tat also acts as a chemokine-like and/or growth factor-like molecule that binds to specific receptors on the surface of the cells, affecting many cellular pathways. In the vascular system, Tat binds to ITGAV/ITGB3 and ITGA5/ITGB1 integrins dimers at the surface of endothelial cells and competes with bFGF for heparin-binding sites, leading to an excess of soluble bFGF. The protein is Protein Tat of Homo sapiens (Human).